Reading from the N-terminus, the 381-residue chain is E3 ubiquitin-protein ligase RNF13 (381 aa).

Positions 1–34 are cleaved as a signal peptide; the sequence is MLLSIGMLMLSATQVYTILTVQLFAFLNLLPVEA. Topologically, residues 35-182 are lumenal; the sequence is DILAYNFENA…VPELSLPLEY (148 aa). One can recognise a PA domain in the interval 64 to 160; it reads LKGFLINSKP…GESSANSLKD (97 aa). The N-linked (GlcNAc...) asparagine glycan is linked to Asn88. The helical transmembrane segment at 183–203 threads the bilayer; sequence YLIPFLIIVGICLILIVIFMI. Residues 204–381 lie on the Cytoplasmic side of the membrane; that stretch reads TKFVQDRHRN…EQDYNIANTV (178 aa). Residues 240–282 form an RING-type; atypical zinc finger; the sequence is CAICLEEYEDGDKLRILPCSHAYHCKCVDPWLTKTKKTCPVCK. The interval 285-381 is disordered; that stretch reads VVPSQGDSDS…EQDYNIANTV (97 aa). Over residues 317-328 the composition is skewed to polar residues; it reads SARTQSFGSLSE. Acidic residues predominate over residues 339–357; sequence SDYEDDDNEETDSSDADNE. Positions 365–381 are enriched in polar residues; the sequence is VQLQPNGEQDYNIANTV.

In terms of assembly, interacts with ERN1. In terms of processing, autoubiquitinated. N-glycosylated and also modified with chondroitin sulfate. Expressed in the brain, heart, kidney, liver and spleen. Higher expression in adult tissues compared to the embryonic counterparts.

It localises to the endoplasmic reticulum membrane. The protein localises to the late endosome membrane. The protein resides in the lysosome membrane. Its subcellular location is the nucleus inner membrane. It catalyses the reaction S-ubiquitinyl-[E2 ubiquitin-conjugating enzyme]-L-cysteine + [acceptor protein]-L-lysine = [E2 ubiquitin-conjugating enzyme]-L-cysteine + N(6)-ubiquitinyl-[acceptor protein]-L-lysine.. It functions in the pathway protein modification; protein ubiquitination. In terms of biological role, E3 ubiquitin-protein ligase that regulates cell proliferation. Involved in apoptosis regulation. Mediates ER stress-induced activation of JNK signaling pathway and apoptosis by promoting ERN1 activation and splicing of XBP1 mRNA. Also involved in protein trafficking and localization. The protein is E3 ubiquitin-protein ligase RNF13 (Rnf13) of Mus musculus (Mouse).